A 135-amino-acid chain; its full sequence is Small ribosomal subunit protein uS11 (135 aa).

This sequence belongs to the universal ribosomal protein uS11 family. As to quaternary structure, part of the 30S ribosomal subunit. Interacts with proteins S7 and S18. Binds to IF-3.

Located on the platform of the 30S subunit, it bridges several disparate RNA helices of the 16S rRNA. Forms part of the Shine-Dalgarno cleft in the 70S ribosome. The chain is Small ribosomal subunit protein uS11 from Cutibacterium acnes (strain DSM 16379 / KPA171202) (Propionibacterium acnes).